We begin with the raw amino-acid sequence, 498 residues long: Putative BTB/POZ domain-containing protein L788 (498 aa).

The BTB domain maps to 28 to 99 (TDIILVLEDD…FYGQKIKSGN (72 aa)).

The protein belongs to the mimivirus BTB/WD family.

This is Putative BTB/POZ domain-containing protein L788 from Acanthamoeba polyphaga (Amoeba).